Consider the following 94-residue polypeptide: uncharacterized protein (94 aa).

Residues 1 to 25 (MRAAIAVLFIALVGLATYHLVMSQA) form the signal peptide.

This is an uncharacterized protein from Archaeoglobus fulgidus (strain ATCC 49558 / DSM 4304 / JCM 9628 / NBRC 100126 / VC-16).